A 368-amino-acid chain; its full sequence is E3 ubiquitin-protein ligase ATL31 (368 aa).

The signal sequence occupies residues M1 to G23. The helical transmembrane segment at A46–I66 threads the bilayer. The RING-type; atypical zinc-finger motif lies at C124–R166. At S247 the chain carries Phosphoserine. A disordered region spans residues N342–V368. Over residues G347–V368 the composition is skewed to polar residues.

It belongs to the RING-type zinc finger family. ATL subfamily.

The protein localises to the membrane. It catalyses the reaction S-ubiquitinyl-[E2 ubiquitin-conjugating enzyme]-L-cysteine + [acceptor protein]-L-lysine = [E2 ubiquitin-conjugating enzyme]-L-cysteine + N(6)-ubiquitinyl-[acceptor protein]-L-lysine.. It participates in protein modification; protein ubiquitination. E3 ubiquitin-protein ligase that is required for the plant C/N response during seedling growth transition. May be involved in the early steps of the plant defense signaling pathway. The polypeptide is E3 ubiquitin-protein ligase ATL31 (ATL31) (Arabidopsis thaliana (Mouse-ear cress)).